A 1984-amino-acid chain; its full sequence is Sodium channel protein type 9 subunit alpha (1984 aa).

Over 1-125 (MAMLPPPGPQ…RRISIKILVH (125 aa)) the chain is Cytoplasmic. Residues 26–47 (RIAEGKTKEPKEEKKDDHDEGP) show a composition bias toward basic and acidic residues. Residues 26–55 (RIAEGKTKEPKEEKKDDHDEGPKPSSDLEA) are disordered. An I repeat occupies 112–408 (FSPLRRISIK…VAMAYEEQNQ (297 aa)). The chain crosses the membrane as a helical span at residues 126-145 (SLFSMLIMCTILTNCIFMTM). The Extracellular portion of the chain corresponds to 146 to 150 (NNPAE). A helical transmembrane segment spans residues 151 to 172 (WTKNVEYTFTGIYTFESLVKIF). The Cytoplasmic segment spans residues 173 to 185 (ARGFCVGEFTFLR). The chain crosses the membrane as a helical span at residues 186–204 (DPWNWLDFIVIVFAYLTEF). Topologically, residues 205 to 210 (VNLGNV) are extracellular. N-linked (GlcNAc...) asparagine glycosylation occurs at N209. The helical transmembrane segment at 211–227 (SALRTFRVLRALKTISV) threads the bilayer. Over 228–241 (IPGLKTIVGALIQS) the chain is Cytoplasmic. A helical transmembrane segment spans residues 242–267 (VKKLSDVIILTVFCLSVFALIGLQLF). Residues 268-344 (MGHLKHKCLR…PDYGYTSFDT (77 aa)) lie on the Extracellular side of the membrane. An intrachain disulfide couples C275 to C322. N281 carries N-linked (GlcNAc...) asparagine glycosylation. Residues 345-361 (FSWAFLALFRLMTQDYW) constitute an intramembrane region (pore-forming). The Extracellular segment spans residues 362-374 (ENLYQQTLRAAGK). The helical transmembrane segment at 375-400 (TYMIFFVVVIFLGSFYLINLILAVVA) threads the bilayer. Over 401-742 (MAYEEQNQAN…FIYIIVMDPF (342 aa)) the chain is Cytoplasmic. The segment covering 459-469 (SSSETSKLSSK) has biased composition (low complexity). Disordered stretches follow at residues 459–517 (SSSE…LGVE) and 563–610 (GSET…PPML). The span at 472-484 (KERRNRRKKKNQK) shows a compositional bias: basic residues. 2 stretches are compositionally biased toward basic and acidic residues: residues 487–508 (SSGE…ESIS) and 571–583 (DEHS…ESRR). The II repeat unit spans residues 723–986 (CSPFWIKFKK…EEDTDANNLQ (264 aa)). The helical transmembrane segment at 743–759 (VDLAITICIVLNTLFMA) threads the bilayer. Over 760 to 768 (MEHHPMTEE) the chain is Extracellular. A helical transmembrane segment spans residues 769 to 793 (FKNVLVVGNLVFTGIFAAEMVLKLI). Over 794 to 802 (AMDPYEYFQ) the chain is Cytoplasmic. A helical transmembrane segment spans residues 803-819 (VGWNVFDSLIVTLSLVE). Residues 820-828 (LFLADVEGL) are Extracellular-facing. Residues 829-845 (SVLRSFRLLRVFKLAKS) form a helical membrane-spanning segment. Residues 846 to 862 (WPTLNMLIKIIGNSVGP) are Cytoplasmic-facing. Residues 863–885 (LGNLTLVLAIIVFIFAVVGMQLF) traverse the membrane as a helical segment. Topologically, residues 886 to 912 (GKSYKECVCKINDDCSLPRWHMNDFFH) are extracellular. C894 and C900 are oxidised to a cystine. An intramembrane region (pore-forming) is located at residues 913–925 (SFLIVFRVLCGEW). Over 926 to 937 (IETMWDCMEVAG) the chain is Extracellular. Residues C932 and C941 are joined by a disulfide bond. The helical transmembrane segment at 938-964 (QAMCLIVYMMVMVIGNLVVLNLFLALL) threads the bilayer. Residues 965-1184 (LSSFSSDNLS…WWNIRKTCYR (220 aa)) lie on the Cytoplasmic side of the membrane. The disordered stretch occupies residues 1087–1146 (PIAPGESDLENMNTEELSSDSESEYSKERLNRSSSSECSTVDNALPGEGEEAEAEPVNSD). Residues 1118–1128 (RSSSSECSTVD) are compositionally biased toward polar residues. Acidic residues predominate over residues 1134–1146 (EGEEAEAEPVNSD). The III repeat unit spans residues 1177–1485 (NIRKTCYRIV…KKYYNAMKKL (309 aa)). The helical transmembrane segment at 1185 to 1209 (IVEHSWFESFIVLMILLSSGALAFE) threads the bilayer. Topologically, residues 1210-1221 (DIYIEKKKTIKI) are extracellular. A helical membrane pass occupies residues 1222–1247 (ILEYADKIFTYIFILEMLLKWVAYGY). Residues 1248–1249 (KT) are Cytoplasmic-facing. The helical transmembrane segment at 1250 to 1275 (YFTNAWCWLDFLIVDVSLVTLVANTL) threads the bilayer. The Extracellular segment spans residues 1276–1284 (GYSDLGPIK). A helical membrane pass occupies residues 1285 to 1301 (SLRTLRALRPLRALSRF). At 1302-1314 (EGMRVVVNALIGA) the chain is on the cytoplasmic side. The chain crosses the membrane as a helical span at residues 1315–1339 (IPSIMNVLLVCLIFWLIFSIMGVNL). Residues 1340 to 1391 (FAGKFYQCVNTTDDSRFPTKQVSNRSECFALMNGSQNVRWKNLKVNFDNVGL) lie on the Extracellular side of the membrane. C1347 and C1367 form a disulfide bridge. Residues N1349, N1363, and N1372 are each glycosylated (N-linked (GlcNAc...) asparagine). Positions 1392 to 1402 (RYLSLLQVATF) form an intramembrane region, pore-forming. Residues 1403–1428 (KGWMDIMYAAVDSVNVDQQPSYEHNL) lie on the Extracellular side of the membrane. The chain crosses the membrane as a helical span at residues 1429-1454 (YMYIYFVIFIIFGSFFTLNLFIGVII). Topologically, residues 1455–1511 (DNFNQQKKKLGGQDIFMTEEQKKYYNAMKKLGSKKPQKPIPRPGNKFQGCIFDLVTN) are cytoplasmic. S1487 carries the phosphoserine; by PKC modification. The stretch at 1494–1792 (IPRPGNKFQG…WEKFDPDATQ (299 aa)) is one IV repeat. The helical transmembrane segment at 1512–1531 (QAFDITIMILICLNMVTMMV) threads the bilayer. Topologically, residues 1532–1542 (EKEGQSDYMTD) are extracellular. Residues 1543–1564 (VLYWINVVFIILFTGECVLKLI) form a helical membrane-spanning segment. At 1565–1573 (SLRHYYFTI) the chain is on the cytoplasmic side. Residues 1574–1595 (GWNIFDFVVVILSIVGMFLAEL) traverse the membrane as a helical segment. Topologically, residues 1596–1604 (IETYFVSPT) are extracellular. The helical transmembrane segment at 1605–1624 (LFRVIRLARIGRILRLIKGA) threads the bilayer. The Cytoplasmic segment spans residues 1625 to 1637 (KGIRTLLFALMMS). A helical membrane pass occupies residues 1638–1660 (LPALFNIGLLLFLVMFIYAIFGM). Topologically, residues 1661–1683 (SNFAYVKKEAGINDMFNFETFGN) are extracellular. Residues 1684–1696 (SMICLFQITTSAG) constitute an intramembrane region (pore-forming). At 1697–1730 (WDGLLAPILNSAPPDCDPKKVHPGSSTEGDCGSP) the chain is on the extracellular side. An intrachain disulfide couples C1712 to C1727. A helical transmembrane segment spans residues 1731–1756 (SVGIFYFVSYIIISFLVVVNMYIAVI). Residues 1757–1984 (LENFSVATEE…KGKDGKETKK (228 aa)) lie on the Cytoplasmic side of the membrane. One can recognise an IQ domain in the interval 1886–1915 (EDVSATVIQRAYRRYRLRQNVKNISSIYIK). Residues 1924-1984 (PNKGDIVFDN…KGKDGKETKK (61 aa)) form a disordered region. A compositionally biased stretch (polar residues) spans 1933 to 1956 (NVNSSSPEKTDATASTISPPSYDS). Over residues 1958-1984 (TKPDKEKYEKDKTEKEDKGKDGKETKK) the composition is skewed to basic and acidic residues.

It belongs to the sodium channel (TC 1.A.1.10) family. Nav1.7/SCN9A subfamily. As to quaternary structure, the Nav1.7 voltage-gated sodium channel consists of an ion-conducting alpha subunit SCN9A which is functional on its own regulated by one or more beta-1 (SCN1B), beta-2 (SCN2B), beta-3 (SCN3B) and beta-4 (SCN4B) subunits. SCN1B and SCN3B are non-covalently associated with SCN9A. SCN2B and SCN4B are disulfide-linked to SCN9A. SCN1B regulates channel inactivation. Interacts with NEDD4 and NEDD4L; regulates Nav1.7 activity most probably through ubiquitination and subsequent endocytosis. Interacts with TMEM233; modulates the gating properties of NaV1.7. In terms of processing, phosphorylation at Ser-1487 by PKC in a highly conserved cytoplasmic loop increases peak sodium currents. Ubiquitinated by NEDD4L; which may promote its endocytosis. As to expression, expressed in the sciatic nerve, spinal cord, brainstem, cerebellum and cortex, but not expressed in the lung, skeletal and cardiac muscles, kidney and liver.

Its subcellular location is the cell membrane. It is found in the cell projection. The protein localises to the neuron projection. It localises to the axon. It carries out the reaction Na(+)(in) = Na(+)(out). In terms of biological role, pore-forming subunit of Nav1.7, a voltage-gated sodium (Nav) channel that directly mediates the depolarizing phase of action potentials in excitable membranes. Navs, also called VGSCs (voltage-gated sodium channels) or VDSCs (voltage-dependent sodium channels), operate by switching between closed and open conformations depending on the voltage difference across the membrane. In the open conformation they allow Na(+) ions to selectively pass through the pore, along their electrochemical gradient. The influx of Na(+) ions provokes membrane depolarization, initiating the propagation of electrical signals throughout cells and tissues. Nav1.7 plays a crucial role in controlling the excitability and action potential propagation from nociceptor neurons, thereby contributing to the sensory perception of pain. This is Sodium channel protein type 9 subunit alpha from Oryctolagus cuniculus (Rabbit).